We begin with the raw amino-acid sequence, 903 residues long: FIGNL1-interacting regulator of recombination and mitosis (903 aa).

Phosphoserine occurs at positions 101 and 795. Residue K843 is modified to N6-acetyllysine.

In terms of assembly, interacts (via its N-terminal region) with PLK1; controls PLK1 kinase activity. Interacts (via the KVVXF motif) with PPP1CC; controls PLK1 kinase activity. Interacts with FIGNL1; may regulate homologous recombination. Phosphorylation at Ser-101 by PLK1 strengthens FIRRM-PLK1 interaction. Phosphorylation at Ser-795 by PLK1 negatively regulates its interaction with PPP1CC.

Its subcellular location is the chromosome. It is found in the centromere. The protein localises to the kinetochore. It localises to the nucleus. The protein resides in the midbody. Its subcellular location is the cytoplasm. It is found in the cytoskeleton. The protein localises to the spindle. Functionally, regulates PLK1 kinase activity at kinetochores and promotes faithful chromosome segregation in prometaphase by bridging kinase and phosphatase activities. Phosphorylation of FIRRM by PLK1 negatively regulates its interaction with the phosphatase, PPP1CC, thus creating a negative feedback loop for maintaining proper PLK1 kinase activity during mitosis. In complex with FIGL1 may regulate homologous recombination. The chain is FIGNL1-interacting regulator of recombination and mitosis from Mus musculus (Mouse).